A 1321-amino-acid chain; its full sequence is MKFGKTFPNHQVPEWAHKYVNYKGLKKQIKEITLVQDALFRQEQGAASQDGPARRRGRESKEQYLGHPEVKKLLAAFFFALDRDIEKVDGFYNMQFMEYDRRLRKLLSSAQLADITSVQRGATGYLHAPLPQYIAYGERERDGLPERYVPPHATDMSEDLAEVLTILLELRSHFRNLKWYGELNKRAFTKIMKKLDKKVGTNQQHSYFQARIKPLEFADDTPIVKALATINEILDRISPCVKDLQDKLRGEDRRLLQGSSSPIDVASQLVTKDDGAGLINELISMYRSVVLIPTRTLVTLLNKSALSRSFSCVDEILGIIPTLGDPSDINGRNFFHHHVIALGKKRTKSLEERDNINSLLSDSLDLEAAIPPEPNTRLVGAFGPDGVNSDDSPAPLSHILQQLPAHLRPSLLQRDNYKRTPLHYSAQYGLCEVTRIILQALSEWDAWNADVAIDDIDVWGDSENLTPLHLAVIGTHPLTVSTLLSFMNPEKSLNSPRLLHLATRLNSPSLLNSLLSAKGFDIDYQEPENLETALYVACKLDIYEAAEYLVKQGANMELGEKLFGWTPIFAAATEGYARIVQLLVDHGAKYDLFDESGWTPMEHAALRGHLDISQLIRITDNKAITRPKFATDWNKSTRPTETTNGLLSALTPSESGSTTTGSENKSSSLTPSTSNEMYALPARSSTSIDKISEPNKGNHRKVLKSQLSHGKVQTIKDTQLPQQPIKSFGHSFLQKDESVILLTLGTNDNRSTIPAVSLNKVPVAKASSTELDTALSLLVTCMDNLDAEPVMLDLPLHENLDSVTFKVPYKKDSSYTIFFDIVPTYGYSMANMNRENSSGMHSNVGNSTGPAYLDAQVGQCGSRLHYDQLGRDTPNTYDQRSRHQASQQKEQIATKKQSKILGRAVALLDSAPTSVGPNRRSIAEAITIPIIGSDTLEVLGIIRFDFLVVTPFVHKNLSVGPAETYWKSLVSTRVIGHRGLGKNMNTNKSLQLGENTVESFIAAASLGASYVEFDVQLTKDNIPVVYHDFLVAESGVDIPMHELTLEQFLDLNGERQRHQDAREAHRNHRSPNGRRLSMDDSSAELIKRSLMMRGDEDRTARDLNTIYGDRMRLTRTFKKNAFKANSRGHAIASSFVTLKELFKKIPQNVGFNIECKYPMVDEAEEEDIGPIAVEMNHWIDTVLEVVYDNVEGRDVIFSSFQPDVCLMLSLKQPSFPILFLTEGGTAKRCDIRAASLQNAIRFAHRWNLLGIVSAAAPIVIAPRLAQIVKSSGLVCVTYGVENNDPEIARVEMDAGVDAVIVDSVLAVRKGLTREAQDADTL.

Residues 1-209 (MKFGKTFPNH…GTNQQHSYFQ (209 aa)) form the SPX domain. 6 ANK repeats span residues 417-446 (YKRT…EWDA), 463-495 (ENLT…SLNS), 497-524 (RLLH…DIDY), 529-558 (NLET…NMEL), 563-592 (FGWT…KYDL), and 596-626 (SGWT…AITR). Disordered regions lie at residues 630 to 698 (ATDW…NKGN), 868 to 893 (QLGR…EQIA), and 1056 to 1079 (QRHQ…LSMD). Residues 633–646 (WNKSTRPTETTNGL) are compositionally biased toward polar residues. Over residues 651 to 668 (TPSESGSTTTGSENKSSS) the composition is skewed to low complexity. Over residues 873-893 (TPNTYDQRSRHQASQQKEQIA) the composition is skewed to polar residues. Residues 972-1311 (TRVIGHRGLG…DSVLAVRKGL (340 aa)) form the GP-PDE domain.

It belongs to the GDE1 family.

It is found in the cytoplasm. It carries out the reaction sn-glycerol 3-phosphocholine + H2O = sn-glycerol 3-phosphate + choline + H(+). Functionally, glycerophosphocholine glycerophosphodiesterase responsible for the hydrolysis of intracellular glycerophosphocholine into glycerol-phosphate and choline. The choline is used for phosphatidyl-choline synthesis. Required for utilization of glycerophosphocholine as phosphate source. This Eremothecium gossypii (strain ATCC 10895 / CBS 109.51 / FGSC 9923 / NRRL Y-1056) (Yeast) protein is Glycerophosphocholine phosphodiesterase GDE1 (GDE1).